A 198-amino-acid chain; its full sequence is Zinc finger protein 41 (198 aa).

Basic residues predominate over residues 1–12 (MEKPATRKKKSQ). Residues 1-56 (MEKPATRKKKSQAPKEEAGAQKATVKGEKTSKGKKATKKPRKPRRPRKEPVLSPED) are disordered. A compositionally biased stretch (basic and acidic residues) spans 13 to 31 (APKEEAGAQKATVKGEKTS). Over residues 32–47 (KGKKATKKPRKPRRPR) the composition is skewed to basic residues. 4 consecutive C2H2-type zinc fingers follow at residues 87-109 (YECG…QRVH), 115-137 (FKCD…QRIH), 143-165 (FKCG…QKTH), and 171-193 (YGCE…RKRH).

This sequence belongs to the krueppel C2H2-type zinc-finger protein family. In terms of tissue distribution, predominantly in the spermatocytes and spermatids of testes. It is also expressed in the fetus and embryonic stem cells at lower levels.

It is found in the nucleus. Functionally, a putative DNA-binding regulatory protein associated with meiosis in spermatogenesis. This is Zinc finger protein 41 (Zfp41) from Mus musculus (Mouse).